A 994-amino-acid polypeptide reads, in one-letter code: cGMP-dependent protein kinase (994 aa).

The segment at 1-162 (MGACISKNSS…QDDSHTEEEK (162 aa)) is disordered. Gly-2 is lipidated: N-myristoyl glycine. Cys-4 carries S-palmitoyl cysteine lipidation. Low complexity-rich tracts occupy residues 9-22 (SSARVSRSSALSAS) and 33-46 (GAAGDETSATGAAE). Basic and acidic residues-rich tracts occupy residues 65-80 (ELERAPDGVCPDREEP) and 133-162 (EGPKEKPGGDRKPAQKAILKQDDSHTEEEK). CNMP-binding domain stretches follow at residues 189 to 305 (VCSS…FLAS), 308 to 407 (FFEM…RVLG), 463 to 539 (GIRF…ATLG), and 561 to 660 (IFRY…NEII). 3',5'-cyclic GMP-binding residues include Gly-253, Glu-254, Ala-256, Arg-263, and Ser-264. Arg-616, Gly-625, Glu-626, Ala-628, Arg-635, and Thr-636 together coordinate 3',5'-cyclic GMP. The region spanning 684–941 (LQVVRVVGRG…YKDIKEHAFF (258 aa)) is the Protein kinase domain. ATP is bound by residues 690–698 (VGRGTFGTV) and Lys-713. Asp-807 functions as the Proton acceptor in the catalytic mechanism. The 53-residue stretch at 942-994 (GDFDWDKLAGRGLPPPLAPKGETYAEDTEQSSFELDEDDTIVLEDEYDWDKDF) folds into the AGC-kinase C-terminal domain. Residues 954 to 976 (LPPPLAPKGETYAEDTEQSSFEL) form a disordered region. Over residues 965 to 976 (YAEDTEQSSFEL) the composition is skewed to acidic residues.

This sequence belongs to the protein kinase superfamily. AGC Ser/Thr protein kinase family. cGMP subfamily. It depends on Mg(2+) as a cofactor.

It localises to the cytoplasm. It is found in the membrane. The protein resides in the cell membrane. The enzyme catalyses L-seryl-[protein] + ATP = O-phospho-L-seryl-[protein] + ADP + H(+). The catalysed reaction is L-threonyl-[protein] + ATP = O-phospho-L-threonyl-[protein] + ADP + H(+). With respect to regulation, activated by cGMP. The cGMP-binding domains acts cooperatively to activate PKG. Inhibited by the antiparasitic small molecule 4-[2-(4-fluorophenyl)-5-(1-methylpiperidine-4-yl)-1Hpyrrol- 3-yl]pyridine (compound 1). In terms of biological role, serine/threonine protein kinase which acts as a downstream effector of the second messenger cGMP. Plays an essential role in tachyzoite invasion of and egress from host cells. During invasion of host cells, regulates the apico-basal flux of F-actin probably via Ca(2+)-mediated activation of CDPK1. In tachyzoites, required for microneme secretion. Required for tachyzoite gliding motility. Functionally, plays an essential role in parasite invasion of and egress from host cells, and microneme secretion. Its function is as follows. Dispensable for parasite invasion of and egress from host cells, and microneme secretion. The protein is cGMP-dependent protein kinase of Toxoplasma gondii.